The primary structure comprises 138 residues: MRTLWIMAVLLVGVEGSLVELGKMILQETGKNPVTSYGAYGCNCGVLGRGKPKDATDRCCYVHKCCYKKLTDCNPKKDRYSYSWKDKTIVCGENNSCLKELCECDKAVAICLRENLDTYNKKYKNNYLKPFCKKADPC.

The N-terminal stretch at 1–16 is a signal peptide; that stretch reads MRTLWIMAVLLVGVEG. Val-34 contacts suramin. Disulfide bonds link Cys-42-Cys-132, Cys-44-Cys-60, Cys-59-Cys-111, Cys-65-Cys-138, Cys-66-Cys-104, Cys-73-Cys-97, and Cys-91-Cys-102. Residue Asn-43 coordinates varespladib. Gly-45 and Gly-48 together coordinate suramin. 2 residues coordinate varespladib: His-63 and Lys-64. Lys-85 provides a ligand contact to suramin.

This sequence belongs to the phospholipase A2 family. Group II subfamily. K49 sub-subfamily. In terms of assembly, monomer in solution. Homodimer; non-covalently linked (probable conventional/extended dimer conformation). Homotetramer (dimer of homodimer (probable conventional/extended dimer conformation)); non-covalently linked. Homooligomer. Expressed by the venom gland.

It is found in the secreted. With respect to regulation, myotoxin activity is inhibited by suramin and varespladib. Inhibition by suramin may be caused by (i) distortion of MDiS from both monomers impairing the membrane disruption mechanism by the toxin and (ii) surface electrostatic changes of the complex that interfere with the toxin membrane dockage process (putative-MDoS is partially hidden). Inhibition by varespladib is probably through varespladib binding to MDoS. Snake venom phospholipase A2 homolog that lacks enzymatic activity. In vivo, it displays local myotoxin and edema-inducing activities and is lethal by intraperitoneal injection. The myotoxicity effect is weaker in comparison to other myotoxins, probably due to the formation of high molecular weight complexes and to the oligomeric conformation (conventional dimer). It shows specificity toward neurons and myotubes, but not on a variety of other cell types. This PLA2 excites a cohort of sensory neurons via ATP release and consequent activation of P2RX2 and/or P2RX3 purinergic receptors. Pannexin hemichannels act as downstream mediators of toxin-evoked ATP release. In vivo, it elicits nonneurogenic inflammatory pain, thermal hyperalgesia, and mechanical allodynia, of which the latter is completely dependent on purinergic signaling. This chain is Basic phospholipase A2 homolog MjTX-I, found in Bothrops moojeni (Lance-headed viper).